Reading from the N-terminus, the 596-residue chain is Genetic interactor of prohibitins 3, mitochondrial (596 aa).

Residues 1 to 21 constitute a mitochondrion transit peptide; the sequence is MLNLCHALRGVRQFSCSVIVK. The CP-type G domain maps to 113 to 305; it reads ESTLNDILNY…LFDLPGYSTS (193 aa).

Belongs to the TRAFAC class YlqF/YawG GTPase family. GEP3 subfamily.

It localises to the mitochondrion. Interacts genetically with prohibitins and thus may be involved in the mitochondrial lipid metabolism. This chain is Genetic interactor of prohibitins 3, mitochondrial (GEP3), found in Saccharomyces cerevisiae (strain AWRI796) (Baker's yeast).